The chain runs to 773 residues: Beta-hexosaminidase B (773 aa).

The first 19 residues, 1-19, serve as a signal peptide directing secretion; the sequence is MKFNRLMALLFGVSSPLYA. Disulfide bonds link Cys-46/Cys-53, Cys-389/Cys-397, and Cys-496/Cys-542. Catalysis depends on Glu-531, which acts as the Proton donor.

The protein belongs to the glycosyl hydrolase 20 family.

It carries out the reaction Hydrolysis of terminal non-reducing N-acetyl-D-hexosamine residues in N-acetyl-beta-D-hexosaminides.. This chain is Beta-hexosaminidase B (nag096), found in Pseudoalteromonas piscicida.